We begin with the raw amino-acid sequence, 261 residues long: Carboxy-terminal domain RNA polymerase II polypeptide A small phosphatase 1 (261 aa).

The residue at position 1 (Met-1) is an N-acetylmethionine. Residues 1-10 (MDSSAVITQI) show a composition bias toward polar residues. A disordered region spans residues 1 to 33 (MDSSAVITQISKEEARGPLRGKGDQKSAASQKP). Positions 11-25 (SKEEARGPLRGKGDQ) are enriched in basic and acidic residues. Residues 86–244 (QDSDKICVVI…HDLLPFFEQL (159 aa)) enclose the FCP1 homology domain. The active-site 4-aspartylphosphate intermediate is the Asp-96. Residues Asp-96, Asp-98, and Asn-207 each coordinate Mg(2+). The active-site Proton donor is the Asp-98.

In terms of assembly, monomer. Interacts with GTF2F1. Interacts with REST. Mg(2+) is required as a cofactor. As to expression, expression is restricted to non-neuronal tissues. Highest expression in skeletal muscle, spleen, lung and placenta.

The protein localises to the nucleus. The enzyme catalyses O-phospho-L-seryl-[protein] + H2O = L-seryl-[protein] + phosphate. It catalyses the reaction O-phospho-L-threonyl-[protein] + H2O = L-threonyl-[protein] + phosphate. With respect to regulation, stimulated by GTF2F1. Inhibited by beryllofluoride anions. Its function is as follows. Preferentially catalyzes the dephosphorylation of 'Ser-5' within the tandem 7 residue repeats in the C-terminal domain (CTD) of the largest RNA polymerase II subunit POLR2A. Negatively regulates RNA polymerase II transcription, possibly by controlling the transition from initiation/capping to processive transcript elongation. Recruited by REST to neuronal genes that contain RE-1 elements, leading to neuronal gene silencing in non-neuronal cells. This Homo sapiens (Human) protein is Carboxy-terminal domain RNA polymerase II polypeptide A small phosphatase 1 (CTDSP1).